The following is a 388-amino-acid chain: Mannitol-1-phosphate 5-dehydrogenase (388 aa).

5 to 16 (AIQFGGGNIGRG) is a binding site for NAD(+). Residue Lys213 is part of the active site.

This sequence belongs to the mannitol dehydrogenase family. Monomer.

It carries out the reaction D-mannitol 1-phosphate + NAD(+) = beta-D-fructose 6-phosphate + NADH + H(+). Functionally, catalyzes the NAD(H)-dependent interconversion of D-fructose 6-phosphate and D-mannitol 1-phosphate in the mannitol metabolic pathway. The sequence is that of Mannitol-1-phosphate 5-dehydrogenase (mpdA) from Aspergillus fumigatus (strain CBS 144.89 / FGSC A1163 / CEA10) (Neosartorya fumigata).